Here is a 269-residue protein sequence, read N- to C-terminus: Embryonic polyadenylate-binding protein 2 (269 aa).

Positions 26–54 are disordered; that stretch reads EAQGWGAWGRTEKTSLVPSAGSDKEAEEN. One can recognise an RRM domain in the interval 139-216; sequence RSVYVGNVDY…RVIKVLPKRT (78 aa). Positions 240 to 269 are disordered; sequence LQGSLQRKPRLRPHGQSRGRGRASPWFSPY. Over residues 246–260 the composition is skewed to basic residues; that stretch reads RKPRLRPHGQSRGRG.

Its subcellular location is the cytoplasm. Functionally, binds the poly(A) tail of mRNA. The chain is Embryonic polyadenylate-binding protein 2 (Pabpn1l) from Rattus norvegicus (Rat).